Here is a 174-residue protein sequence, read N- to C-terminus: uncharacterized protein (174 aa).

Residues 1-31 form the signal peptide; that stretch reads MCCVYRMNRPASGLTVVFCGKLSGKPGPKSA. Residues 39-59 are disordered; sequence KSGADDGGENPRFFSAGPRTE.

This is an uncharacterized protein from Escherichia coli (strain K12).